Reading from the N-terminus, the 147-residue chain is ATP synthase epsilon chain (147 aa).

This sequence belongs to the ATPase epsilon chain family. F-type ATPases have 2 components, CF(1) - the catalytic core - and CF(0) - the membrane proton channel. CF(1) has five subunits: alpha(3), beta(3), gamma(1), delta(1), epsilon(1). CF(0) has three main subunits: a, b and c.

The protein resides in the cell inner membrane. Its function is as follows. Produces ATP from ADP in the presence of a proton gradient across the membrane. The polypeptide is ATP synthase epsilon chain (Protochlamydia amoebophila (strain UWE25)).